The primary structure comprises 150 residues: Large ribosomal subunit protein bL9 (150 aa).

It belongs to the bacterial ribosomal protein bL9 family.

Its function is as follows. Binds to the 23S rRNA. This is Large ribosomal subunit protein bL9 from Alteromonas mediterranea (strain DSM 17117 / CIP 110805 / LMG 28347 / Deep ecotype).